A 262-amino-acid chain; its full sequence is Lipoate-protein ligase A subunit 1 (262 aa).

Residues 30–226 (YGDKPILRFY…GFSETLHIDF (197 aa)) form the BPL/LPL catalytic domain. Residues R72, G77, Y80, D85, P132, and K135 each contribute to the ATP site. 2 residues coordinate Mg(2+): T137 and D138. ATP contacts are provided by K145, A149, and A163. K145 contacts (R)-lipoate. A149 serves as a coordination point for Mg(2+).

This sequence belongs to the LplA family. In terms of assembly, heterodimer composed of LplA and LplB.

It localises to the cytoplasm. It carries out the reaction L-lysyl-[lipoyl-carrier protein] + (R)-lipoate + ATP = N(6)-[(R)-lipoyl]-L-lysyl-[lipoyl-carrier protein] + AMP + diphosphate + H(+). It functions in the pathway protein modification; protein lipoylation via exogenous pathway; protein N(6)-(lipoyl)lysine from lipoate: step 1/2. The protein operates within protein modification; protein lipoylation via exogenous pathway; protein N(6)-(lipoyl)lysine from lipoate: step 2/2. Part of a lipoate-protein ligase complex that catalyzes both the ATP-dependent activation of exogenously supplied lipoate to lipoyl-AMP and the transfer of the activated lipoyl onto the lipoyl domains of lipoate-dependent enzymes. Can also use octanoate as substrate. This chain is Lipoate-protein ligase A subunit 1 (lplA), found in Thermoplasma acidophilum (strain ATCC 25905 / DSM 1728 / JCM 9062 / NBRC 15155 / AMRC-C165).